We begin with the raw amino-acid sequence, 113 residues long: U11-theraphotoxin-Hhn1a (113 aa).

Positions 1–21 are cleaved as a signal peptide; that stretch reads MNTVRVTFLLVFVLAVSLGQA. Positions 22 to 74 are excised as a propeptide; the sequence is DKDENRMEMQEKTEQGKSYLDFAENLLLQKLEELVAKLLEEDSEESRNSRQKR. Disulfide bonds link Cys75–Cys90, Cys82–Cys95, and Cys89–Cys110.

This sequence belongs to the neurotoxin 14 (magi-1) family. 01 (HNTX-16) subfamily. Expressed by the venom gland.

The protein resides in the secreted. Functionally, probable ion channel inhibitor. The polypeptide is U11-theraphotoxin-Hhn1a (Cyriopagopus hainanus (Chinese bird spider)).